The following is a 428-amino-acid chain: tRNA modification GTPase MnmE (428 aa).

(6S)-5-formyl-5,6,7,8-tetrahydrofolate-binding residues include arginine 20, glutamate 76, and arginine 116. One can recognise a TrmE-type G domain in the interval 212–351 (GFEVAIVGAP…LVAAIGERLL (140 aa)). Residue asparagine 222 coordinates K(+). GTP is bound by residues 222–227 (NAGKST), 241–247 (SEIAGTT), and 266–269 (DTAG). Serine 226 serves as a coordination point for Mg(2+). K(+) is bound by residues serine 241, isoleucine 243, and threonine 246. Residue threonine 247 coordinates Mg(2+). Residue lysine 428 coordinates (6S)-5-formyl-5,6,7,8-tetrahydrofolate.

The protein belongs to the TRAFAC class TrmE-Era-EngA-EngB-Septin-like GTPase superfamily. TrmE GTPase family. Homodimer. Heterotetramer of two MnmE and two MnmG subunits. It depends on K(+) as a cofactor.

It localises to the cytoplasm. Its function is as follows. Exhibits a very high intrinsic GTPase hydrolysis rate. Involved in the addition of a carboxymethylaminomethyl (cmnm) group at the wobble position (U34) of certain tRNAs, forming tRNA-cmnm(5)s(2)U34. The sequence is that of tRNA modification GTPase MnmE from Cereibacter sphaeroides (strain ATCC 17029 / ATH 2.4.9) (Rhodobacter sphaeroides).